We begin with the raw amino-acid sequence, 277 residues long: Energy-coupling factor transporter ATP-binding protein EcfA1 (277 aa).

Positions Ile4–Asp238 constitute an ABC transporter domain. Gly37 to Ser44 contacts ATP.

This sequence belongs to the ABC transporter superfamily. Energy-coupling factor EcfA family. Forms a stable energy-coupling factor (ECF) transporter complex composed of 2 membrane-embedded substrate-binding proteins (S component), 2 ATP-binding proteins (A component) and 2 transmembrane proteins (T component).

The protein localises to the cell membrane. ATP-binding (A) component of a common energy-coupling factor (ECF) ABC-transporter complex. Unlike classic ABC transporters this ECF transporter provides the energy necessary to transport a number of different substrates. This Methanospirillum hungatei JF-1 (strain ATCC 27890 / DSM 864 / NBRC 100397 / JF-1) protein is Energy-coupling factor transporter ATP-binding protein EcfA1.